A 226-amino-acid chain; its full sequence is DnaJ homolog subfamily C member 30, mitochondrial (226 aa).

Residues 1 to 38 (MAAMRWRWWQRLLPWRLLQARGFPQNSAPSLGLGARTY) constitute a mitochondrion transit peptide. The J domain maps to 49 to 114 (ALYDLLGVPS…TLRRKYDRGL (66 aa)). Residues 116-157 (SDEDLRGPGVRPSRTPAPDPGSPRTPPPTSRTHDGSRASPGA) are disordered. Positions 130–144 (TPAPDPGSPRTPPPT) are enriched in pro residues. The chain crosses the membrane as a helical span at residues 208 to 225 (DTAAIFLIFSIFIIIGFY).

As to quaternary structure, associates with the ATP synthase complex. Interacts with MT-ATP6; interaction is direct. Interacts with ATP5MC2; interaction is direct. Expressed in brain, heart, kidney, liver, lung, spleen, stomach and testis. Highly expressed in the brain. In the neocortex, expressed in most, if not all, glutamatergic excitatory projection neurons (pyramidal) and many interneurons, with the strongest signal noticeably in large pyramidal neurons of layer 3C. Also present in pyramidal neurons of layer 3C PNs of the superior temporal cortex, as well as in pyramidal neurons (Betz cells) of the layer 5B primary motor cortex (at protein level).

The protein resides in the mitochondrion inner membrane. Its function is as follows. Mitochondrial protein enriched in neurons that acts as a regulator of mitochondrial respiration. Associates with the ATP synthase complex and facilitates ATP synthesis. May be a chaperone protein involved in the turnover of the subunits of mitochondrial complex I N-module. It facilitates the degradation of N-module subunits damaged by oxidative stress, and contributes to complex I functional efficiency. The chain is DnaJ homolog subfamily C member 30, mitochondrial from Homo sapiens (Human).